The following is a 519-amino-acid chain: Probable cytochrome P450 513D1 (519 aa).

The helical transmembrane segment at 1-21 (MGISSIIIILFIIVLLKKLIK) threads the bilayer. C464 serves as a coordination point for heme.

It belongs to the cytochrome P450 family. The cofactor is heme.

It localises to the membrane. The sequence is that of Probable cytochrome P450 513D1 (cyp513D1) from Dictyostelium discoideum (Social amoeba).